We begin with the raw amino-acid sequence, 624 residues long: Pentatricopeptide repeat-containing protein At4g31070, mitochondrial (624 aa).

The N-terminal 15 residues, 1–15 (MRWVKLGRRVIMSRA), are a transit peptide targeting the mitochondrion. PPR repeat units lie at residues 56-91 (FTAI…GADC), 92-122 (DTVV…MLHR), 123-157 (DTVS…GFIP), 158-192 (KSEL…DERM), 195-225 (SVLL…MEVK), 226-260 (NEVS…NLRP), 261-296 (NRVT…GCHA), 297-327 (DERL…SKVR), 328-362 (DVVM…GIEA), 363-397 (NSVT…GFMS), 398-428 (HILL…LTEK), 429-463 (DLVS…GHEV), 464-498 (DDMA…HMPV), and 499-529 (TLEH…MPMK). The segment at 534 to 610 (IWSSLLSACE…CYGFSKIEPE (77 aa)) is type E motif.

This sequence belongs to the PPR family. PCMP-E subfamily.

Its subcellular location is the mitochondrion. In Arabidopsis thaliana (Mouse-ear cress), this protein is Pentatricopeptide repeat-containing protein At4g31070, mitochondrial (PCMP-E7).